A 124-amino-acid chain; its full sequence is Succinate dehydrogenase cytochrome b556 subunit (124 aa).

Over 1-29 the chain is Cytoplasmic; it reads MTKTKQEIYNKRPTSPHLSIYKLQISSTL. Residues 30–55 traverse the membrane as a helical segment; sequence SILHRMTGVALFFAVSILAWWLILSK. Residues 56-67 lie on the Periplasmic side of the membrane; the sequence is YDNNYLQFANCC. Residues 68-88 traverse the membrane as a helical segment; it reads IIKICLVAVSYAWFYHLCNGI. Heme is bound at residue His-83. The Cytoplasmic segment spans residues 89 to 103; sequence RHLFWDIGYGFSIKA. The chain crosses the membrane as a helical span at residues 104–124; it reads VNITGWCVVVCSILLTMLLWV.

This sequence belongs to the cytochrome b560 family. Part of an enzyme complex containing four subunits: a flavoprotein, an iron-sulfur protein, plus two membrane-anchoring proteins, SdhC and SdhD. The complex can form homotrimers. Heme is required as a cofactor.

The protein localises to the cell inner membrane. It participates in carbohydrate metabolism; tricarboxylic acid cycle. Membrane-anchoring subunit of succinate dehydrogenase (SDH). The polypeptide is Succinate dehydrogenase cytochrome b556 subunit (sdhC) (Rickettsia felis (strain ATCC VR-1525 / URRWXCal2) (Rickettsia azadi)).